Reading from the N-terminus, the 252-residue chain is Probable S-methyl-5'-thioinosine phosphorylase (252 aa).

Phosphate-binding positions include Thr-8 and 44-45 (RH). Residue Met-173 coordinates substrate. Position 174 (Thr-174) interacts with phosphate. 197-199 (NYA) is a binding site for substrate.

Belongs to the PNP/MTAP phosphorylase family. MTAP subfamily. As to quaternary structure, homotrimer.

The catalysed reaction is S-methyl-5'-thioinosine + phosphate = 5-(methylsulfanyl)-alpha-D-ribose 1-phosphate + hypoxanthine. Its pathway is purine metabolism; purine nucleoside salvage. In terms of biological role, catalyzes the reversible phosphorylation of S-methyl-5'-thioinosine (MTI) to hypoxanthine and 5-methylthioribose-1-phosphate. Involved in the breakdown of S-methyl-5'-thioadenosine (MTA), a major by-product of polyamine biosynthesis. Catabolism of (MTA) occurs via deamination to MTI and phosphorolysis to hypoxanthine. This is Probable S-methyl-5'-thioinosine phosphorylase from Methanocaldococcus jannaschii (strain ATCC 43067 / DSM 2661 / JAL-1 / JCM 10045 / NBRC 100440) (Methanococcus jannaschii).